A 352-amino-acid chain; its full sequence is Ubiquitin thioesterase otulin (352 aa).

The disordered stretch occupies residues 1-49 (MSRGTMPQPGAWPGASCAETPAREAGAAARDGGKVTAGAQPRAATRCPA). The span at 18-30 (AETPAREAGAAAR) shows a compositional bias: low complexity. Positions 49 to 73 (AEHEEDMYRAADEIEKEKELLIHER) form a coiled coil. The PIM motif signature appears at 52–57 (EEDMYR). Tyr56 carries the post-translational modification Phosphotyrosine. Linear diubiquitin binding regions lie at residues 95 to 96 (EW) and 124 to 126 (RGD). The 229-residue stretch at 118 to 346 (TSIRRVRGDN…DRHYNIPVRV (229 aa)) folds into the OTU domain. Asp126 is an active-site residue. Residue Cys129 is the Nucleophile of the active site. Linear diubiquitin binding stretches follow at residues 255-259 (FFSVL), 283-289 (TGGLEQV), and 336-338 (DDR). Residue His339 is part of the active site. The short motif at 349–352 (ETSV) is the PDZ-binding element.

The protein belongs to the peptidase C65 family. Otulin subfamily. In terms of assembly, interacts (via the PUB domain) with RNF31 (via the PIM motif); the interaction is direct. Interacts with DVL2. In terms of processing, ubiquitinated. Acetylated. Post-translationally, phosphorylated. Phosphorylation at Tyr-56 prevents interaction with RNF31; dephosphorylation promotes interaction with RNF31 and the LUBAC complex.

The protein resides in the cytoplasm. It carries out the reaction Thiol-dependent hydrolysis of ester, thioester, amide, peptide and isopeptide bonds formed by the C-terminal Gly of ubiquitin (a 76-residue protein attached to proteins as an intracellular targeting signal).. Deubiquitinase that specifically removes linear ('Met-1'-linked) polyubiquitin chains to substrates and acts as a regulator of angiogenesis and innate immune response. Required during angiogenesis, craniofacial and neuronal development by regulating the canonical Wnt signaling together with the LUBAC complex. Acts as a negative regulator of NF-kappa-B by regulating the activity of the LUBAC complex. OTULIN function is mainly restricted to homeostasis of the LUBAC complex: acts by removing 'Met-1'-linked autoubiquitination of the LUBAC complex, thereby preventing inactivation of the LUBAC complex. Acts as a key negative regulator of inflammation by restricting spontaneous inflammation and maintaining immune homeostasis. In myeloid cell, required to prevent unwarranted secretion of cytokines leading to inflammation and autoimmunity by restricting linear polyubiquitin formation. Plays a role in innate immune response by restricting linear polyubiquitin formation on LUBAC complex in response to NOD2 stimulation, probably to limit NOD2-dependent pro-inflammatory signaling. The chain is Ubiquitin thioesterase otulin from Mus musculus (Mouse).